The primary structure comprises 319 residues: MITLLFLLVVGAQAQHEWTYSEGVLDEKHWRLQYPDCGGTRQSPIDLKMKKVRYNPSLRALNLTGYGLRQGEFPMTNNGHTVQISLPSSMRMTTSDGSQYLAKQMHFHWGGDSSEISGSEHTVDGMRYIIEIHVVHYHSKYGSYEEAQNEPDGLAVLAALVEVKDYAENTYYSNFISHLEDIRYAGQSTVLRDLDIQDMLPGDLRYYYSYLGSLTTPSCTENVHWFVVADTVKLSKTQIEKLENSLLNHQNETIQNNYRSTQPLNHRVVEANFVSHPHQEYTLGSKLHFYLNNIDQNLEYLRRFIEQKITKRKKEKYWP.

The signal sequence occupies residues Met1–Ala14. Residues His16–Phe273 form the Alpha-carbonic anhydrase domain. A disulfide bridge connects residues Cys37 and Cys219. N-linked (GlcNAc...) asparagine glycosylation occurs at Asn62. The active-site Proton donor/acceptor is the His80. 3 residues coordinate Zn(2+): His106, His108, and His133. Residue Thr215–Thr216 participates in substrate binding. The N-linked (GlcNAc...) asparagine glycan is linked to Asn251.

This sequence belongs to the alpha-carbonic anhydrase family. It depends on Zn(2+) as a cofactor. Major constituent of saliva.

Its subcellular location is the secreted. The catalysed reaction is hydrogencarbonate + H(+) = CO2 + H2O. Reversible hydration of carbon dioxide. Its role in saliva is unknown. The sequence is that of Carbonic anhydrase 6 (CA6) from Bos taurus (Bovine).